The following is a 361-amino-acid chain: Phospho-N-acetylmuramoyl-pentapeptide-transferase (361 aa).

10 helical membrane passes run 25–45 (TGGA…WIID), 72–92 (TPTM…VLWA), 95–115 (LNPY…VGFY), 135–155 (LLIE…LGRG), 169–189 (VVLN…VGAG), 200–220 (GLAI…SYLV), 240–260 (LAVL…FNAP), 264–284 (IFMG…IAVA), 289–309 (IVLA…IVQV), and 338–358 (QIVI…LSTL).

It belongs to the glycosyltransferase 4 family. MraY subfamily. Mg(2+) is required as a cofactor.

It localises to the cell inner membrane. It carries out the reaction UDP-N-acetyl-alpha-D-muramoyl-L-alanyl-gamma-D-glutamyl-meso-2,6-diaminopimeloyl-D-alanyl-D-alanine + di-trans,octa-cis-undecaprenyl phosphate = di-trans,octa-cis-undecaprenyl diphospho-N-acetyl-alpha-D-muramoyl-L-alanyl-D-glutamyl-meso-2,6-diaminopimeloyl-D-alanyl-D-alanine + UMP. It participates in cell wall biogenesis; peptidoglycan biosynthesis. Catalyzes the initial step of the lipid cycle reactions in the biosynthesis of the cell wall peptidoglycan: transfers peptidoglycan precursor phospho-MurNAc-pentapeptide from UDP-MurNAc-pentapeptide onto the lipid carrier undecaprenyl phosphate, yielding undecaprenyl-pyrophosphoryl-MurNAc-pentapeptide, known as lipid I. This is Phospho-N-acetylmuramoyl-pentapeptide-transferase from Rhodopseudomonas palustris (strain HaA2).